The sequence spans 66 residues: Type 3 secretion system chaperone YscE (66 aa).

This sequence belongs to the YscE family. In terms of assembly, component of the heterodimeric YscE-YscG chaperone. The YscE-YscG chaperone forms a stable ternary complex with YscF/SctF. YscE interacts with YscG, but makes very little direct contact with YscF. Homodimer in solution.

Its subcellular location is the cytoplasm. Functionally, chaperone of the type III secretion system (T3SS), also called injectisome, which is used to inject bacterial effector proteins into eukaryotic host cells. Along with YscG, prevents premature polymerization of the YscF/SctF needle protein within the cytoplasm. Is also required for stable expression of cytosolic YscF and for YscF secretion. Likely plays a role in targeting YscF present in the cytosolic YscEFG complex to the T3SS apparatus. Required for Yop secretion. The protein is Type 3 secretion system chaperone YscE of Yersinia pestis.